The primary structure comprises 141 residues: Acetyltransferase YE1169 (141 aa).

Residues 1–141 (MEIRVFQQSD…GKRLIVDQEY (141 aa)) enclose the N-acetyltransferase domain.

It belongs to the acetyltransferase family. YpeA subfamily.

This Yersinia enterocolitica serotype O:8 / biotype 1B (strain NCTC 13174 / 8081) protein is Acetyltransferase YE1169.